A 60-amino-acid polypeptide reads, in one-letter code: Large ribosomal subunit protein uL30 (60 aa).

This sequence belongs to the universal ribosomal protein uL30 family. Part of the 50S ribosomal subunit.

The sequence is that of Large ribosomal subunit protein uL30 from Streptococcus equi subsp. equi (strain 4047).